We begin with the raw amino-acid sequence, 251 residues long: Tyrosine transport ATP-binding protein (251 aa).

The 247-residue stretch at 2 to 248 (LQIKNLSKSF…TVEEILEKFE (247 aa)) folds into the ABC transporter domain. ATP is bound at residue 39–46 (GSNGTGKS).

It belongs to the ABC transporter superfamily. In terms of assembly, the complex is probably composed of two ATP-binding proteins (CDR20291_0806), two transmembrane proteins (CDR20291_0807) and a solute-binding protein (CDR20291_0805).

It is found in the cell membrane. It carries out the reaction L-tyrosine(out) + ATP + H2O = L-tyrosine(in) + ADP + phosphate + H(+). In terms of biological role, probably part of an ABC transporter complex involved in tyrosine uptake. May also import phenylalanine. Probably responsible for energy coupling to the transport system. The chain is Tyrosine transport ATP-binding protein from Clostridioides difficile (strain R20291) (Peptoclostridium difficile).